We begin with the raw amino-acid sequence, 176 residues long: Glutamyl-tRNA(Gln) amidotransferase subunit F, mitochondrial (176 aa).

The protein belongs to the GatF family. As to quaternary structure, subunit of the heterotrimeric GatFAB amidotransferase (AdT) complex, composed of A, B and F subunits.

It is found in the mitochondrion inner membrane. It carries out the reaction L-glutamyl-tRNA(Gln) + L-glutamine + ATP + H2O = L-glutaminyl-tRNA(Gln) + L-glutamate + ADP + phosphate + H(+). Its function is as follows. Allows the formation of correctly charged Gln-tRNA(Gln) through the transamidation of misacylated Glu-tRNA(Gln) in the mitochondria. The reaction takes place in the presence of glutamine and ATP through an activated gamma-phospho-Glu-tRNA(Gln). Required for proper protein synthesis within the mitochondrion. This chain is Glutamyl-tRNA(Gln) amidotransferase subunit F, mitochondrial, found in Yarrowia lipolytica (strain CLIB 122 / E 150) (Yeast).